We begin with the raw amino-acid sequence, 357 residues long: Aminomethyltransferase (357 aa).

This sequence belongs to the GcvT family. As to quaternary structure, the glycine cleavage system is composed of four proteins: P, T, L and H.

The catalysed reaction is N(6)-[(R)-S(8)-aminomethyldihydrolipoyl]-L-lysyl-[protein] + (6S)-5,6,7,8-tetrahydrofolate = N(6)-[(R)-dihydrolipoyl]-L-lysyl-[protein] + (6R)-5,10-methylene-5,6,7,8-tetrahydrofolate + NH4(+). In terms of biological role, the glycine cleavage system catalyzes the degradation of glycine. This chain is Aminomethyltransferase, found in Deinococcus deserti (strain DSM 17065 / CIP 109153 / LMG 22923 / VCD115).